Here is a 489-residue protein sequence, read N- to C-terminus: Carboxyl-terminal-processing peptidase 1, chloroplastic (489 aa).

A compositionally biased stretch (low complexity) spans 1-20 (MRLLLPFSSPLSATSSPSTP). The tract at residues 1-27 (MRLLLPFSSPLSATSSPSTPQFIPELP) is disordered. The PDZ domain maps to 189–273 (FSRMSKYDIT…TFVVLKVKHG (85 aa)). Active-site charge relay system residues include serine 403 and lysine 428.

Belongs to the peptidase S41A family.

It localises to the plastid. Its subcellular location is the chloroplast thylakoid lumen. It catalyses the reaction The enzyme shows specific recognition of a C-terminal tripeptide, Xaa-Yaa-Zaa, in which Xaa is preferably Ala or Leu, Yaa is preferably Ala or Tyr, and Zaa is preferably Ala, but then cleaves at a variable distance from the C-terminus. A typical cleavage is -Ala-Ala-|-Arg-Ala-Ala-Lys-Glu-Asn-Tyr-Ala-Leu-Ala-Ala.. Functionally, protease involved in the C-terminal processing of the chloroplastic D1 protein of photosystem II. This proteolytic processing is necessary to allow the light-driven assembly of the tetranuclear manganese cluster, which is responsible for photosynthetic water oxidation. The sequence is that of Carboxyl-terminal-processing peptidase 1, chloroplastic (CTPA1) from Arabidopsis thaliana (Mouse-ear cress).